The sequence spans 368 residues: Phospho-N-acetylmuramoyl-pentapeptide-transferase (368 aa).

Transmembrane regions (helical) follow at residues 30–50 (AAAI…IAYL), 72–92 (LPTM…FLWA), 99–119 (VWLV…DDYL), 135–155 (LIGQ…DPSM), 170–190 (LTIN…TAIS), 201–221 (GLAA…AYLA), 238–258 (GGEV…FLWF), 265–286 (IIMG…ALLI), and 345–365 (KIVI…LMTL).

The protein belongs to the glycosyltransferase 4 family. MraY subfamily. Requires Mg(2+) as cofactor.

Its subcellular location is the cell inner membrane. The catalysed reaction is UDP-N-acetyl-alpha-D-muramoyl-L-alanyl-gamma-D-glutamyl-meso-2,6-diaminopimeloyl-D-alanyl-D-alanine + di-trans,octa-cis-undecaprenyl phosphate = di-trans,octa-cis-undecaprenyl diphospho-N-acetyl-alpha-D-muramoyl-L-alanyl-D-glutamyl-meso-2,6-diaminopimeloyl-D-alanyl-D-alanine + UMP. The protein operates within cell wall biogenesis; peptidoglycan biosynthesis. Functionally, catalyzes the initial step of the lipid cycle reactions in the biosynthesis of the cell wall peptidoglycan: transfers peptidoglycan precursor phospho-MurNAc-pentapeptide from UDP-MurNAc-pentapeptide onto the lipid carrier undecaprenyl phosphate, yielding undecaprenyl-pyrophosphoryl-MurNAc-pentapeptide, known as lipid I. In Chlorobium chlorochromatii (strain CaD3), this protein is Phospho-N-acetylmuramoyl-pentapeptide-transferase.